The sequence spans 54 residues: Large ribosomal subunit protein uL15 (54 aa).

Residues Met1–Gly30 show a composition bias toward basic residues. The segment at Met1–Arg42 is disordered. His39 carries the post-translational modification (3S)-3-hydroxyhistidine. Position 47 is an N6-acetyllysine (Lys47).

This sequence belongs to the universal ribosomal protein uL15 family. As to quaternary structure, component of the large ribosomal subunit. Hydroxylated on His-39 by MINA.

The protein resides in the cytoplasm. Functionally, component of the large ribosomal subunit. The ribosome is a large ribonucleoprotein complex responsible for the synthesis of proteins in the cell. This Sus scrofa (Pig) protein is Large ribosomal subunit protein uL15 (RPL27A).